The chain runs to 112 residues: Macrodomain Ori protein (112 aa).

Residues 91-112 (FHTLSGGKPQVEGAEDYTDSDD) are disordered. The segment covering 103–112 (GAEDYTDSDD) has biased composition (acidic residues).

It belongs to the MaoP family.

Involved in the organization of the Ori region of the chromosome into a macrodomain (MD). It constrains DNA mobility in the Ori macrodomain and limits long-distance DNA interactions with other chromosomal regions. In Escherichia coli O157:H7, this protein is Macrodomain Ori protein.